The following is a 145-amino-acid chain: Large ribosomal subunit protein bL19 (145 aa).

The segment covering 114–136 has biased composition (basic and acidic residues); it reads IAEKMESPAAKATREAAKKEAKA. Residues 114–145 are disordered; sequence IAEKMESPAAKATREAAKKEAKAAKKNAAPAE.

Belongs to the bacterial ribosomal protein bL19 family.

Functionally, this protein is located at the 30S-50S ribosomal subunit interface and may play a role in the structure and function of the aminoacyl-tRNA binding site. This Methylocella silvestris (strain DSM 15510 / CIP 108128 / LMG 27833 / NCIMB 13906 / BL2) protein is Large ribosomal subunit protein bL19.